Here is a 357-residue protein sequence, read N- to C-terminus: Holliday junction branch migration complex subunit RuvB (357 aa).

Low complexity predominate over residues 1-15 (MAIQSDSLSSLPDSP). A disordered region spans residues 1-30 (MAIQSDSLSSLPDSPRIVAPQPVSPNEESI). The tract at residues 13–195 (DSPRIVAPQP…FGIVSRLEFY (183 aa)) is large ATPase domain (RuvB-L). ATP-binding positions include L34, R35, G76, K79, T80, T81, 142–144 (EDF), R185, Y195, and R232. T80 is a Mg(2+) binding site. Residues 196-266 (NTDELARIVT…AAGRALAMLD (71 aa)) are small ATPAse domain (RuvB-S). The tract at residues 269-357 (PQGLDVMDRK…SGGTGELFSK (89 aa)) is head domain (RuvB-H). DNA-binding residues include R305, R324, and R329.

It belongs to the RuvB family. Homohexamer. Forms an RuvA(8)-RuvB(12)-Holliday junction (HJ) complex. HJ DNA is sandwiched between 2 RuvA tetramers; dsDNA enters through RuvA and exits via RuvB. An RuvB hexamer assembles on each DNA strand where it exits the tetramer. Each RuvB hexamer is contacted by two RuvA subunits (via domain III) on 2 adjacent RuvB subunits; this complex drives branch migration. In the full resolvosome a probable DNA-RuvA(4)-RuvB(12)-RuvC(2) complex forms which resolves the HJ.

Its subcellular location is the cytoplasm. It catalyses the reaction ATP + H2O = ADP + phosphate + H(+). Its function is as follows. The RuvA-RuvB-RuvC complex processes Holliday junction (HJ) DNA during genetic recombination and DNA repair, while the RuvA-RuvB complex plays an important role in the rescue of blocked DNA replication forks via replication fork reversal (RFR). RuvA specifically binds to HJ cruciform DNA, conferring on it an open structure. The RuvB hexamer acts as an ATP-dependent pump, pulling dsDNA into and through the RuvAB complex. RuvB forms 2 homohexamers on either side of HJ DNA bound by 1 or 2 RuvA tetramers; 4 subunits per hexamer contact DNA at a time. Coordinated motions by a converter formed by DNA-disengaged RuvB subunits stimulates ATP hydrolysis and nucleotide exchange. Immobilization of the converter enables RuvB to convert the ATP-contained energy into a lever motion, pulling 2 nucleotides of DNA out of the RuvA tetramer per ATP hydrolyzed, thus driving DNA branch migration. The RuvB motors rotate together with the DNA substrate, which together with the progressing nucleotide cycle form the mechanistic basis for DNA recombination by continuous HJ branch migration. Branch migration allows RuvC to scan DNA until it finds its consensus sequence, where it cleaves and resolves cruciform DNA. This Bordetella pertussis (strain Tohama I / ATCC BAA-589 / NCTC 13251) protein is Holliday junction branch migration complex subunit RuvB.